The sequence spans 294 residues: Retinoic acid receptor responder protein 1 (294 aa).

Over 1–20 (MQPRRQRLPAPWSGPRGPRP) the chain is Lumenal. The chain crosses the membrane as a helical; Signal-anchor for type III membrane protein span at residues 21–42 (TAPLLALLLLLAPVAAPAGSGD). Cystatin LXN-type domains lie at 38-153 (AGSG…EKKK) and 173-276 (EIVS…TPEE). A glycan (O-linked (Xyl...) (chondroitin sulfate) serine) is linked at serine 40. Over 43 to 294 (PDDPGQPQDA…AVVPTELSNF (252 aa)) the chain is Cytoplasmic. The tract at residues 273 to 294 (TPEEASGTEEGSAVVPTELSNF) is disordered.

Belongs to the protease inhibitor I47 (latexin) family. Interacts with AGBL2, KIF11 and MAPRE1. In terms of processing, not N-glycosylated. O-glycosylated; contains chondroitin sulfate. As to expression, detected in urine (at protein level).

It is found in the membrane. Its subcellular location is the secreted. In terms of biological role, inhibitor of the cytoplasmic carboxypeptidase AGBL2, may regulate the alpha-tubulin tyrosination cycle. In Homo sapiens (Human), this protein is Retinoic acid receptor responder protein 1 (RARRES1).